The chain runs to 171 residues: Peptide deformylase (171 aa).

Positions 91 and 133 each coordinate Fe cation. Residue E134 is part of the active site. Residue H137 participates in Fe cation binding.

This sequence belongs to the polypeptide deformylase family. Requires Fe(2+) as cofactor.

It carries out the reaction N-terminal N-formyl-L-methionyl-[peptide] + H2O = N-terminal L-methionyl-[peptide] + formate. Its function is as follows. Removes the formyl group from the N-terminal Met of newly synthesized proteins. Requires at least a dipeptide for an efficient rate of reaction. N-terminal L-methionine is a prerequisite for activity but the enzyme has broad specificity at other positions. This is Peptide deformylase from Mannheimia succiniciproducens (strain KCTC 0769BP / MBEL55E).